The following is a 472-amino-acid chain: MNIDSIVRELIGQASGITADSRSVKPGFIFVCLSEAAKGFVPDAVKAGAKFIVAGNAGGLPHVDHSQIIICPMQHDLYYKLASEFYHASQPEFVAVVTGTNGKTSVADFCRQIWCLTGHTGASMGTLGAIVGNTTLPSSTSFTTPDAVELHKTLSTLRDLQVKYLCMEASSHGMAQKRLYGVKASAAAFTNLSGDHLDYHGSMEKYWATKQKLFSEVLSCEGCAVLNADSEQYGELRELAAGRNIITYGVDTGDVKLARLERNTQGHNITVKVCGEVIYDGAFPVLGKFQISNLLCALAIVAASGSGHRDVPIDRLASPRGRMELIGDRIIIDYAHTSDALKHALTSLKWHGFPQKTVLVFGCGGDRDREKRKTMGMVASQYADVVIVTDDNPRSENPETIRKEIMLHCENAIEIPDRGDAIHYAVNFAIRNNYVLLIAGKGHETTQQIAGKSVEFNDGTAVRRCLSEMQYA.

Serine 21 serves as a coordination point for UDP-N-acetyl-alpha-D-muramoyl-L-alanyl-D-glutamate. ATP is bound at residue 99–105 (GTNGKTS). UDP-N-acetyl-alpha-D-muramoyl-L-alanyl-D-glutamate is bound by residues 143–144 (TT), serine 170, glutamine 176, and arginine 178. Lysine 210 carries the N6-carboxylysine modification. Residues arginine 367, 391–394 (DNPR), glycine 440, and glutamate 444 each bind meso-2,6-diaminopimelate. Residues 391-394 (DNPR) carry the Meso-diaminopimelate recognition motif motif.

Belongs to the MurCDEF family. MurE subfamily. Requires Mg(2+) as cofactor. Post-translationally, carboxylation is probably crucial for Mg(2+) binding and, consequently, for the gamma-phosphate positioning of ATP.

Its subcellular location is the cytoplasm. The enzyme catalyses UDP-N-acetyl-alpha-D-muramoyl-L-alanyl-D-glutamate + meso-2,6-diaminopimelate + ATP = UDP-N-acetyl-alpha-D-muramoyl-L-alanyl-gamma-D-glutamyl-meso-2,6-diaminopimelate + ADP + phosphate + H(+). It functions in the pathway cell wall biogenesis; peptidoglycan biosynthesis. Catalyzes the addition of meso-diaminopimelic acid to the nucleotide precursor UDP-N-acetylmuramoyl-L-alanyl-D-glutamate (UMAG) in the biosynthesis of bacterial cell-wall peptidoglycan. This is UDP-N-acetylmuramoyl-L-alanyl-D-glutamate--2,6-diaminopimelate ligase from Anaplasma marginale (strain St. Maries).